Here is a 3086-residue protein sequence, read N- to C-terminus: MMNFGSLNVGLKQVDGTWVPRVFEEKEMARLLAEKQHARVMRATQEMMKAPNPFAEFDEMHQRGNPFAGRVRKCETREPKSAQKPIVTVDTVPVAIYTDVIWPENGKVHALSRRRAPRKHARRSKILACDLLTQVLNISRRAGKSVEVIGKRRCCLKPRRRDGKSCFGVITKHHKGVLSSRDMVKDLFVDSIIEHIAYTGHTPLIDAADIKPGDSGLIYREKKDGYVTRVVRGRHDGDIIDARDYVRAGIHTIKHYSDDGKSLVKYAPYCQPSHHTFGHMCRVTWSDTEILQFREMLSQAIMPQRDPRCDICAEVAGQRTKDEILQHARTSQMMQMLEFGKEDERWKAPRRVMETLLEESNWPSMDYSTSSEITTICCGNNDEPFRRIYSIMKVLAEPNLADVSAWQEANSSLLQLARYMKNREMSVQAGNSATFTNPFPPTVHTFGPTNNGADILQGPWDNWGDKQPIALAFFEKHFNKWQINEFSIDRRVRKHIRGTRKLALMDLNQSRSIKDLEDHVQEEEIPYERKTESCITMYKDQYLYSCSCVTARDGKPYLSMRYLQATGLIPIARGADVQHMPNSDSWQGFYYVAPEGYCYINIFLPMLALAPYYKVGKLSELIGKLIKVLGKWPKLKDVALACLYITEYHTYAQNALLPPILVHHSTRTMHVVDTLGSLSVGYHVLKAGTVKHLVNLASRLATGEMLDYNVGGSLGGIHAYDLLIRSTFDHVLLERALETDPYYILYSALSPTVLKQMYTSKSYANALRVFVRSNQSLFQVVCTLENLARRMTRAQSIEQQIMQLQSLYPQLLDMLADNIPDSPLSWLSHHVTTDSMQRAIELNNCDIELARGGYASINTSWRKKKEQYYADLIKEYYNALSPQAKIFVSRAYIGYLHATTPLFANARKISSEIASNICTQAYSRTIGRGISIVSSGGRKGKTWLTARGDSFYKTMISRAIKLYTPEVSAVIGVATVVGILLSTMTTLHTYLVKNKQTAQKTNEKFEELMYDKVALYIPKYDAEHSHLQGKDLDFEHFARWLMARDKKLSSFVQSHLVDTVTHQAKDDTNVWIEKCIATIVLMMMAIDSNKSDKLYQILCKLRTVFSTMGQTVVTHQSIDEILDIDESKRTTIDFERVEVMQPTQPILKTTFEGFWDMQIQMGRTVAHYRTTGRLVELTRENIAEVVATISSDTANAEFIVRGGVGTGKSTSLPTALCERGRVLMLEPTRPLTENVAQQLRGEPHFKSPSVHMRGLNTFGSSRITIMTSGYALHYYANNRQLLRDFEFIMFDECHVMDSSAMAFYSLCNDAKVAAKLLKVSATPAGRECEFKPMFPVRVSEAAQLSFESFVTAQGSKSTYDIIQYGNNILVYVASYNEVDKLAAMLLEKRFRVTKVDGRTMKLNTHGIELHGTAQVKHFIVATNIIENGVTLEIDCLVDFGTKVVAQLDTEGRRIMYMKVPISYGERIQRLGRVGRTKPGARLKVGHTMRGIVEIPEVIATEAAFQCFMYDLPVMTGQVSVSLLSKCTREQARTMAAFELSPFTMSNLVAFDGTMHPAIHDLLKKFKLRDSTVVLRRTALPLRASASWYTVREYETIIGDLHIENKDVRIPFVANDLSNSLLEGLWDAIQCNRSDVSTTKLTTVSANKIAYTLKTDTSSIQRTISIIDDLLAEERKKQEMFTHHLSTTSGGYTFGLNAIAMCIKSRYAKGYCIENIATLTNVRNQLTEFSGMSEDQYTSEIIQNYPDLTLVHHQSKQEIIRNLKLKAKYDQTLIASDLLLGTAVLIGGGAMLYKTFMTETNTRVHLEGDGKRQREKLQYRAARDSKQDYEVYADEREIQENYGEAYTKHGRKGPAHEKGTGSKTREFTNFYGFDPAEYDTVRLVDPITGKTCDKAVRDLLRMRDVADTFAEIRESMDEDMILQPGVNFAPALIEAYFMNSRTNAARRVDLVPHNPMQVGRLSNNIAGFPTHDGELRQSRPSRPIQKDQVPAANEYSVQHESKSIAKGLRDYHPVSSNLCALEYYCGDMRTSIYGVCYGPYILTTAHLIKEKGGWLKIRTKHGLFKLEAMDRVQIRELCGSDIIVIKGPKDMPPAPMRLKFRAPKSGERAVLVGFVDDNLDRQLVSDSSAVYRRENTGFWKHWITTKYGNCGLPMVSVDTMDIIGLHSLGAQNSNENYFAALTDDFSKQFFEPETDVPWQRKWSYNADKVNYGTMDLTSNQPSGAFKTTKLLEDLLEAVSHQSQEYTWLTKYCGANLLVIGKCPGNLITKHVIKGKSPTFDLFLSVDAQASDFFKPLMGDYAPSRLNREAFVKDITKYDTEIPIGNLSITDFENAVEDTYYILKDSGIEQCNYITDAIPIFDSMNMKAATGALYGGKKKDYFENYTDDMKQNILKESYIRLREGKMGIWNGSLKAELRSKEKVEANKTRVFTAAPLDTLLAGKGCVDDFNNQFYAAHLKGPWTVGITKFFGRWNDFLSELPPGWDYFDADGSRFDSSLTPFLLNAVLNIRKKFMINWAFGQRCLGNLYTEIIYTPIATPDGSVVKKMRGNNSGQPSTVVDNTIMVIIAMQYAISKAEFPAGRLRDQIRYFANGDDLVVAVEPSLSDKISSFSASFAELGLSYDFSNKVNDRSELQFMSHTGKLIDGMYIPMLERERICAILEWSRSDEPQFQLDAISAAMIEAWGDDELLYQIRRYYSWLLEQEPYKSIAELGHAPYLAEAALKALYTGKDPDAELIAIYERAMLNTPPTEDRPTKVVHEANVTAASSAATQTSTTSPTVTSTSGASTSTSSGTTSAPLASTTPPVSATTTPSTGTTAPTTPTVRAANLPDIAGHRKAKANGESQLNVRGENDDEDVPAASEFALPRLPTLGAKIRVPKFKGAIVLNKDHLIKYTPDQRDLSNTRATQEQFEKWYSGVRNEVEKTDEEMALLLNGSMVWCMENGTSPDLSGSWTMMEGEEQIAYPLEPFCRHAQPTLRSIMAHFSDAATAYVVLRNQKSRYMPRYGLKRGLNDYSLAPYAFDFYEITSTSPLRARERHAQMKAAAIRGKASRMFGLDGNVSAQSENTERHTVEDVNTRVHSLSGANML.

One can recognise a Peptidase S30 domain in the interval 122–256 (RRSKILACDL…RAGIHTIKHY (135 aa)). Residues H173, D182, and S215 each act as for P1 proteinase activity in the active site. The 122-residue stretch at 590-711 (YYVAPEGYCY…TGEMLDYNVG (122 aa)) folds into the Peptidase C6 domain. Active-site for helper component proteinase activity residues include C598 and H670. Residues 1189-1341 (ISSDTANAEF…PMFPVRVSEA (153 aa)) enclose the Helicase ATP-binding domain. 1202 to 1209 (GGVGTGKS) lines the ATP pocket. A DEAH box motif is present at residues 1291 to 1294 (DECH). Y1870 is subject to O-(5'-phospho-RNA)-tyrosine. The segment at 1970–1990 (HDGELRQSRPSRPIQKDQVPA) is disordered. The Peptidase C4 domain occupies 2000-2217 (SKSIAKGLRD…VNYGTMDLTS (218 aa)). Catalysis depends on for nuclear inclusion protein A activity residues H2045, D2080, and C2149. One can recognise a RdRp catalytic domain in the interval 2482–2606 (WDYFDADGSR…AVEPSLSDKI (125 aa)). The span at 2762-2821 (TAASSAATQTSTTSPTVTSTSGASTSTSSGTTSAPLASTTPPVSATTTPSTGTTAPTTPT) shows a compositional bias: low complexity. The interval 2762 to 2822 (TAASSAATQT…GTTAPTTPTV (61 aa)) is disordered. Phosphothreonine is present on T3069.

The protein belongs to the potyviridae genome polyprotein family. VPg is uridylylated by the polymerase and is covalently attached to the 5'-end of the genomic RNA. This uridylylated form acts as a nucleotide-peptide primer for the polymerase. In terms of processing, genome polyprotein of potyviruses undergoes post-translational proteolytic processing by the main proteinase NIa-pro resulting in the production of at least ten individual proteins. The P1 proteinase and the HC-pro cleave only their respective C-termini autocatalytically. 6K1 is essential for proper proteolytic separation of P3 from CI.

The protein resides in the host cytoplasmic vesicle membrane. The protein localises to the host cytoplasmic vesicle. Its subcellular location is the virion. The catalysed reaction is RNA(n) + a ribonucleoside 5'-triphosphate = RNA(n+1) + diphosphate. The enzyme catalyses Hydrolyzes glutaminyl bonds, and activity is further restricted by preferences for the amino acids in P6 - P1' that vary with the species of potyvirus, e.g. Glu-Xaa-Xaa-Tyr-Xaa-Gln-|-(Ser or Gly) for the enzyme from tobacco etch virus. The natural substrate is the viral polyprotein, but other proteins and oligopeptides containing the appropriate consensus sequence are also cleaved.. It carries out the reaction Hydrolyzes a Gly-|-Gly bond at its own C-terminus, commonly in the sequence -Tyr-Xaa-Val-Gly-|-Gly, in the processing of the potyviral polyprotein.. Functionally, required for aphid transmission and also has proteolytic activity. Only cleaves a Gly-Gly dipeptide at its own C-terminus. Interacts with virions and aphid stylets. Acts as a suppressor of RNA-mediated gene silencing, also known as post-transcriptional gene silencing (PTGS), a mechanism of plant viral defense that limits the accumulation of viral RNAs. May have RNA-binding activity. In terms of biological role, has helicase activity. It may be involved in replication. Indispensable for virus replication. Reduces the abundance of host transcripts related to jasmonic acid biosynthesis therefore altering the host defenses. In order to increase its own stability, decreases host protein degradation pathways. Its function is as follows. Indispensable for virus replication. Functionally, mediates the cap-independent, EIF4E-dependent translation of viral genomic RNAs. Binds to the cap-binding site of host EIF4E and thus interferes with the host EIF4E-dependent mRNA export and translation. VPg-RNA directly binds EIF4E and is a template for transcription. Also forms trimeric complexes with EIF4E-EIF4G, which are templates for translation. In terms of biological role, has RNA-binding and proteolytic activities. An RNA-dependent RNA polymerase that plays an essential role in the virus replication. Its function is as follows. Involved in aphid transmission, cell-to-cell and systemis movement, encapsidation of the viral RNA and in the regulation of viral RNA amplification. The sequence is that of Genome polyprotein from Dactylis glomerata (Orchard grass).